Here is a 254-residue protein sequence, read N- to C-terminus: Phycobilisome rod-core linker polypeptide CpcG3 (254 aa).

Residues 11–191 (SSQNHRVKSF…DFQETAGTVK (181 aa)) enclose the PBS-linker domain.

It belongs to the phycobilisome linker protein family. In terms of assembly, the phycobilisome is a hemidiscoidal structure that is composed of two distinct substructures: a core complex and a number of rods radiating from the core.

It localises to the cellular thylakoid membrane. Rod-core linker protein required for attachment of phycocyanin to allophycocyanin in cores of phycobilisomes. In terms of biological role, linker polypeptides determine the state of aggregation and the location of the disk-shaped phycobiliprotein units within the phycobilisome and modulate their spectroscopic properties in order to mediate a directed and optimal energy transfer. This chain is Phycobilisome rod-core linker polypeptide CpcG3 (cpcG3), found in Mastigocladus laminosus (Fischerella sp.).